Reading from the N-terminus, the 156-residue chain is ATP synthase subunit b 1 (156 aa).

Residues 7-29 (LLGQAISFALFVWFCMKYVWPPL) traverse the membrane as a helical segment.

The protein belongs to the ATPase B chain family. F-type ATPases have 2 components, F(1) - the catalytic core - and F(0) - the membrane proton channel. F(1) has five subunits: alpha(3), beta(3), gamma(1), delta(1), epsilon(1). F(0) has three main subunits: a(1), b(2) and c(10-14). The alpha and beta chains form an alternating ring which encloses part of the gamma chain. F(1) is attached to F(0) by a central stalk formed by the gamma and epsilon chains, while a peripheral stalk is formed by the delta and b chains.

The protein resides in the cell inner membrane. F(1)F(0) ATP synthase produces ATP from ADP in the presence of a proton or sodium gradient. F-type ATPases consist of two structural domains, F(1) containing the extramembraneous catalytic core and F(0) containing the membrane proton channel, linked together by a central stalk and a peripheral stalk. During catalysis, ATP synthesis in the catalytic domain of F(1) is coupled via a rotary mechanism of the central stalk subunits to proton translocation. In terms of biological role, component of the F(0) channel, it forms part of the peripheral stalk, linking F(1) to F(0). This Vibrio campbellii (strain ATCC BAA-1116) protein is ATP synthase subunit b 1.